Consider the following 655-residue polypeptide: Putative calcium up-regulated protein J (655 aa).

The region spanning 40–181 (KSRAMLKGDN…DNVCFQWDLE (142 aa)) is the Ricin B-type lectin domain.

This sequence belongs to the cup family.

The protein is Putative calcium up-regulated protein J (cupJ) of Dictyostelium discoideum (Social amoeba).